We begin with the raw amino-acid sequence, 208 residues long: Segregation and condensation protein B (208 aa).

Belongs to the ScpB family. In terms of assembly, homodimer. Homodimerization may be required to stabilize the binding of ScpA to the Smc head domains. Component of a cohesin-like complex composed of ScpA, ScpB and the Smc homodimer, in which ScpA and ScpB bind to the head domain of Smc. The presence of the three proteins is required for the association of the complex with DNA.

Its subcellular location is the cytoplasm. In terms of biological role, participates in chromosomal partition during cell division. May act via the formation of a condensin-like complex containing Smc and ScpA that pull DNA away from mid-cell into both cell halves. The chain is Segregation and condensation protein B from Mycoplasma pneumoniae (strain ATCC 29342 / M129 / Subtype 1) (Mycoplasmoides pneumoniae).